The following is a 336-amino-acid chain: Holliday junction branch migration complex subunit RuvB (336 aa).

The large ATPase domain (RuvB-L) stretch occupies residues 4 to 184 (ADRLISAGTT…FGIVQRLEFY (181 aa)). Residues I23, R24, G65, K68, T69, T70, 131–133 (EDY), R174, Y184, and R221 contribute to the ATP site. T69 lines the Mg(2+) pocket. The small ATPAse domain (RuvB-S) stretch occupies residues 185-255 (QVPDLQYIVS…IAAQALDMLN (71 aa)). The segment at 258–336 (AEGFDYMDRK…HFGITPPEMP (79 aa)) is head domain (RuvB-H). Positions 294, 313, and 318 each coordinate DNA.

The protein belongs to the RuvB family. Homohexamer. Forms an RuvA(8)-RuvB(12)-Holliday junction (HJ) complex. HJ DNA is sandwiched between 2 RuvA tetramers; dsDNA enters through RuvA and exits via RuvB. An RuvB hexamer assembles on each DNA strand where it exits the tetramer. Each RuvB hexamer is contacted by two RuvA subunits (via domain III) on 2 adjacent RuvB subunits; this complex drives branch migration. In the full resolvosome a probable DNA-RuvA(4)-RuvB(12)-RuvC(2) complex forms which resolves the HJ.

The protein localises to the cytoplasm. It catalyses the reaction ATP + H2O = ADP + phosphate + H(+). Its function is as follows. The RuvA-RuvB-RuvC complex processes Holliday junction (HJ) DNA during genetic recombination and DNA repair, while the RuvA-RuvB complex plays an important role in the rescue of blocked DNA replication forks via replication fork reversal (RFR). RuvA specifically binds to HJ cruciform DNA, conferring on it an open structure. The RuvB hexamer acts as an ATP-dependent pump, pulling dsDNA into and through the RuvAB complex. RuvB forms 2 homohexamers on either side of HJ DNA bound by 1 or 2 RuvA tetramers; 4 subunits per hexamer contact DNA at a time. Coordinated motions by a converter formed by DNA-disengaged RuvB subunits stimulates ATP hydrolysis and nucleotide exchange. Immobilization of the converter enables RuvB to convert the ATP-contained energy into a lever motion, pulling 2 nucleotides of DNA out of the RuvA tetramer per ATP hydrolyzed, thus driving DNA branch migration. The RuvB motors rotate together with the DNA substrate, which together with the progressing nucleotide cycle form the mechanistic basis for DNA recombination by continuous HJ branch migration. Branch migration allows RuvC to scan DNA until it finds its consensus sequence, where it cleaves and resolves cruciform DNA. This is Holliday junction branch migration complex subunit RuvB from Escherichia coli O17:K52:H18 (strain UMN026 / ExPEC).